Consider the following 165-residue polypeptide: MRVLFLIYLILSPFGAEARTLLENHEGLNVGSGYGRGANLPPPSPASSPPSKEVSNSVSPTRTDEKTSENTELVMTTIAQGENINQLFSFPTSADNYYQLASFKKLFISYLLPVSYVWNLIGSSSFDHDLVDIFDSKSDERYWNRKPLSPPSPKPADGQRPLHSY.

A signal peptide spans 1-18 (MRVLFLIYLILSPFGAEA). Residues 19–35 (RTLLENHEGLNVGSGYG) constitute a propeptide that is removed on maturation. 2 disordered regions span residues 33-70 (GYGR…TSEN) and 142-165 (YWNR…LHSY). P42, P43, P45, P49, and P50 each carry 4-hydroxyproline. 5 O-linked (Ara...) hydroxyproline glycosylation sites follow: P42, P43, P45, P49, and P50. The propeptide occupies 54 to 143 (VSNSVSPTRT…FDSKSDERYW (90 aa)). P150, P151, and P153 each carry 4-hydroxyproline. 3 O-linked (Ara...) hydroxyproline glycosylation sites follow: P150, P151, and P153. A propeptide spanning residues 162–165 (LHSY) is cleaved from the precursor.

Post-translationally, O-glycosylated; contains pentose side chains. As to expression, expressed in leaves.

It localises to the secreted. In terms of biological role, activates a lipid-based signal transduction pathway in which linolenic acid is converted to jasmonic acid, a potent activator of defense gene transcription, including proteinase inhibitors. This is Hydroxyproline-rich systemin A from Nicotiana tabacum (Common tobacco).